The chain runs to 430 residues: Adenylosuccinate synthetase (430 aa).

Residues 12–18 (GDEGKGK) and 40–42 (GHT) contribute to the GTP site. Asp13 (proton acceptor) is an active-site residue. Residues Asp13 and Gly40 each contribute to the Mg(2+) site. IMP-binding positions include 13 to 16 (DEGK), 38 to 41 (NAGH), Thr128, Arg142, Gln223, Thr238, and Arg302. His41 acts as the Proton donor in catalysis. 298-304 (TTTGRPR) is a binding site for substrate. Residues Arg304, 330-332 (SID), and 412-414 (SVG) each bind GTP.

Belongs to the adenylosuccinate synthetase family. Homodimer. Mg(2+) serves as cofactor.

Its subcellular location is the cytoplasm. It catalyses the reaction IMP + L-aspartate + GTP = N(6)-(1,2-dicarboxyethyl)-AMP + GDP + phosphate + 2 H(+). It functions in the pathway purine metabolism; AMP biosynthesis via de novo pathway; AMP from IMP: step 1/2. In terms of biological role, plays an important role in the de novo pathway of purine nucleotide biosynthesis. Catalyzes the first committed step in the biosynthesis of AMP from IMP. This is Adenylosuccinate synthetase from Streptococcus agalactiae serotype III (strain NEM316).